The primary structure comprises 512 residues: Retinaldehyde dehydrogenase 3 (512 aa).

Positions 1–22 (MATANGAVENGQPDRKPPALPR) are disordered. At Ala2 the chain carries N-acetylalanine. Residues Lys204, Glu207, and 257–262 (GSTEVG) each bind NAD(+). Glu280 acts as the Proton acceptor in catalysis. Cys314 (nucleophile) is an active-site residue. Residues Gln361 and Glu411 each coordinate NAD(+).

It belongs to the aldehyde dehydrogenase family. As to quaternary structure, homotetramer. As to expression, expressed at low levels in many tissues and at higher levels in salivary gland, stomach, and kidney.

Its subcellular location is the cytoplasm. The catalysed reaction is all-trans-retinal + NAD(+) + H2O = all-trans-retinoate + NADH + 2 H(+). The enzyme catalyses retinal + NAD(+) + H2O = retinoate + NADH + 2 H(+). It catalyses the reaction all-trans-13,14-dihydroretinal + NAD(+) + H2O = all-trans-13,14-dihydroretinoate + NADH + 2 H(+). It participates in cofactor metabolism; retinol metabolism. Its function is as follows. Catalyzes the NAD-dependent oxidation of aldehyde substrates, such as all-trans-retinal and all-trans-13,14-dihydroretinal, to their corresponding carboxylic acids, all-trans-retinoate and all-trans-13,14-dihydroretinoate, respectively. High specificity for all-trans-retinal as substrate, can also accept acetaldehyde as substrate in vitro but with lower affinity. Required for the biosynthesis of normal levels of retinoate in the embryonic ocular and nasal regions; a critical lipid in the embryonic development of the eye and the nasal region. This is Retinaldehyde dehydrogenase 3 (ALDH1A3) from Homo sapiens (Human).